The following is a 359-amino-acid chain: Aminoacyl tRNA synthase complex-interacting multifunctional protein 1 (359 aa).

The tract at residues 52 to 92 is required for fibroblast proliferation; the sequence is AVLKRLEQKGAEADQIIEYLKQQVALLKEKAVLQATLREEK. The tract at residues 100–241 is interaction with HSP90B1; it reads KLKKEIEELK…APRTVISGLV (142 aa). Positions 149-163 are required for endothelial cell death; sequence SVSTISCSIKEHSKG. The tract at residues 156–196 is disordered; the sequence is SIKEHSKGGGEEKKVKEKTDKKGEKKEKKLQSAAPSADSKP. Basic and acidic residues predominate over residues 157 to 185; the sequence is IKEHSKGGGEEKKVKEKTDKKGEKKEKKL. Residues 163–239 form a required for endothelial cell migration region; the sequence is GGGEEKKVKE…EAAPRTVISG (77 aa). K184 is covalently cross-linked (Glycyl lysine isopeptide (Lys-Gly) (interchain with G-Cter in SUMO1)). The residue at position 187 (S187) is a Phosphoserine. Residues 198–299 enclose the tRNA-binding domain; it reads DVSRLDLRIG…NGSVPGDRIT (102 aa). At K316 the chain carries N6-succinyllysine.

In terms of assembly, homodimer. Part of the multisynthetase complex (MSC), a multisubunit complex that groups tRNA ligases for Arg (RARS1), Asp (DARS1), Gln (QARS1), Ile (IARS1), Leu (LARS1), Lys (KARS1), Met (MARS1) the bifunctional ligase for Glu and Pro (EPRS1) and the auxiliary subunits AIMP1/p43, AIMP2/p38 and EEF1E1/p18. Interacts (via N-terminus) with RARS1 (via N-terminus). Part of a complex composed of RARS1, QARS1 and AIMP1. Interacts (via C-terminus) with SMURF2. Interacts (via N-terminus) with HSP90B1/gp96 (via C-terminus). Interacts with PSMA7. Interacts with TARS3. Post-translationally, cleaved by caspase-7 in response to apoptosis to produce EMAP-II.

Its subcellular location is the nucleus. It is found in the cytoplasm. It localises to the cytosol. The protein localises to the secreted. The protein resides in the endoplasmic reticulum. Its subcellular location is the golgi apparatus. Non-catalytic component of the multisynthase complex. Stimulates the catalytic activity of cytoplasmic arginyl-tRNA synthase. Binds tRNA. Possesses inflammatory cytokine activity. Negatively regulates TGF-beta signaling through stabilization of SMURF2 by binding to SMURF2 and inhibiting its SMAD7-mediated degradation. Involved in glucose homeostasis through induction of glucagon secretion at low glucose levels. Promotes dermal fibroblast proliferation and wound repair. Regulates KDELR1-mediated retention of HSP90B1/gp96 in the endoplasmic reticulum. Plays a role in angiogenesis by inducing endothelial cell migration at low concentrations and endothelian cell apoptosis at high concentrations. Induces maturation of dendritic cells and monocyte cell adhesion. This Cricetulus griseus (Chinese hamster) protein is Aminoacyl tRNA synthase complex-interacting multifunctional protein 1 (AIMP1).